Consider the following 163-residue polypeptide: Succinate dehydrogenase assembly factor 2, mitochondrial (163 aa).

The protein belongs to the SDHAF2 family. As to quaternary structure, interacts with the flavoprotein subunit within the SDH catalytic dimer.

Its subcellular location is the mitochondrion matrix. Functionally, plays an essential role in the assembly of succinate dehydrogenase (SDH), an enzyme complex (also referred to as respiratory complex II) that is a component of both the tricarboxylic acid (TCA) cycle and the mitochondrial electron transport chain, and which couples the oxidation of succinate to fumarate with the reduction of ubiquinone (coenzyme Q) to ubiquinol. Required for flavinylation (covalent attachment of FAD) of the flavoprotein subunit of the SDH catalytic dimer. In Kluyveromyces lactis (strain ATCC 8585 / CBS 2359 / DSM 70799 / NBRC 1267 / NRRL Y-1140 / WM37) (Yeast), this protein is Succinate dehydrogenase assembly factor 2, mitochondrial.